The chain runs to 339 residues: Glycerol-3-phosphate dehydrogenase [NAD(P)+] (339 aa).

S15, Y16, H36, and K110 together coordinate NADPH. K110, G139, and T141 together coordinate sn-glycerol 3-phosphate. Residue A143 participates in NADPH binding. Sn-glycerol 3-phosphate contacts are provided by K195, D248, S258, R259, and N260. The active-site Proton acceptor is K195. R259 serves as a coordination point for NADPH. V283 and E285 together coordinate NADPH.

It belongs to the NAD-dependent glycerol-3-phosphate dehydrogenase family.

It localises to the cytoplasm. The catalysed reaction is sn-glycerol 3-phosphate + NAD(+) = dihydroxyacetone phosphate + NADH + H(+). It carries out the reaction sn-glycerol 3-phosphate + NADP(+) = dihydroxyacetone phosphate + NADPH + H(+). It functions in the pathway membrane lipid metabolism; glycerophospholipid metabolism. Functionally, catalyzes the reduction of the glycolytic intermediate dihydroxyacetone phosphate (DHAP) to sn-glycerol 3-phosphate (G3P), the key precursor for phospholipid synthesis. The chain is Glycerol-3-phosphate dehydrogenase [NAD(P)+] from Pectobacterium carotovorum subsp. carotovorum (strain PC1).